Reading from the N-terminus, the 117-residue chain is MGFRVLVLVVMATTFALPFTFFEEPGRSPFRPALRSEEAQALRHGLTLLLARRADGQPPDMRQPEMRRPEMRRPEVRQPEFAELSVGQRRWDVDQCMYYCLTGVVGYSYTECETMCT.

Residues 1 to 22 form the signal peptide; the sequence is MGFRVLVLVVMATTFALPFTFF. Positions 23–90 are excised as a propeptide; that stretch reads EEPGRSPFRP…FAELSVGQRR (68 aa). Positions 53–77 are disordered; the sequence is RADGQPPDMRQPEMRRPEMRRPEVR. The span at 62–77 shows a compositional bias: basic and acidic residues; it reads RQPEMRRPEMRRPEVR. Disulfide bonds link cysteine 96-cysteine 116 and cysteine 100-cysteine 112.

Belongs to the conotoxin R superfamily. Expressed by the venom duct.

The protein localises to the secreted. The chain is Conotoxin vil14.2 from Conus villepinii (Villepin's cone).